A 445-amino-acid chain; its full sequence is MTKVITRFAPSPTGMLHVGNIRVALLNWLYAKKHNGQFILRFDDTDLERSKQEYKNAIEEDLKFLKINWDQTFNQLSRLSRYDVIKKLLLDKKRLYTCYETPEELELKRKVQLSKGLPPIYDRASLNLTTEQIKKYIEQGRKPHYRFLVNHELISWHDMIKGEVKYDGKALSDPIVIRADGSMTYMLCSVIDDIDYDITHIIRGEDHVGNTAIQIQMFEALNKIPPVFGHLSLIINKDEKISKRIGGFEIATLRKQIGLEAMAIASFFSLLGSSSQILPYKNMDELATQFEISNFSKSPTMYQPEDLVRLNHKLLISVDFDEVKERLKEIDATYIDENFWLSVRPNLQKLRDVKDWWDICNQTPNVENLNLDKEYLKQAAELLPQGEITKDSWRIWTKEITNITSRKGKELFLPLRLALTGRESGPEIAGILPLIDRKEIIKRLT.

A 'HIGH' region motif is present at residues 10–20; that stretch reads PSPTGMLHVGN. Positions 240-244 match the 'KMSKS' region motif; the sequence is KISKR. Lys-243 is an ATP binding site.

Belongs to the class-I aminoacyl-tRNA synthetase family. Glutamate--tRNA ligase type 1 subfamily. As to quaternary structure, monomer.

It is found in the cytoplasm. The enzyme catalyses tRNA(Glu) + L-glutamate + ATP = L-glutamyl-tRNA(Glu) + AMP + diphosphate. In terms of biological role, catalyzes the attachment of glutamate to tRNA(Glu) in a two-step reaction: glutamate is first activated by ATP to form Glu-AMP and then transferred to the acceptor end of tRNA(Glu). The protein is Glutamate--tRNA ligase 2 of Rickettsia canadensis (strain McKiel).